Reading from the N-terminus, the 384-residue chain is 23S rRNA (uracil(747)-C(5))-methyltransferase RlmC (384 aa).

4 residues coordinate [4Fe-4S] cluster: Cys-3, Cys-11, Cys-14, and Cys-87. Gln-212, Phe-241, Glu-262, and Asn-309 together coordinate S-adenosyl-L-methionine. Cys-336 acts as the Nucleophile in catalysis.

The protein belongs to the class I-like SAM-binding methyltransferase superfamily. RNA M5U methyltransferase family. RlmC subfamily.

The catalysed reaction is uridine(747) in 23S rRNA + S-adenosyl-L-methionine = 5-methyluridine(747) in 23S rRNA + S-adenosyl-L-homocysteine + H(+). Functionally, catalyzes the formation of 5-methyl-uridine at position 747 (m5U747) in 23S rRNA. This chain is 23S rRNA (uracil(747)-C(5))-methyltransferase RlmC, found in Shewanella amazonensis (strain ATCC BAA-1098 / SB2B).